We begin with the raw amino-acid sequence, 362 residues long: 4-hydroxytryptamine kinase (362 aa).

ATP-binding positions include N37, K57, and 118–120 (QDV). Residue D224 is part of the active site. 249–251 (DWE) is an ATP binding site.

This sequence belongs to the methylthioribose kinase family. As to quaternary structure, monomer. Mg(2+) serves as cofactor.

The enzyme catalyses 4-hydroxytryptamine + ATP = norbaeocystin + ADP + H(+). It catalyses the reaction psilocin + ATP = psilocybin + ADP + H(+). It carries out the reaction 4-hydroxy-N,N,N-trimethyltryptamine + ATP = aeruginascin + ADP + H(+). It functions in the pathway secondary metabolite biosynthesis. Functionally, 4-hydroxytryptamine kinase; part of the gene cluster that mediates the biosynthesis of psilocybin, a psychotropic tryptamine-derived natural product. The first step in the pathway is the decarboxylation of L-tryptophan to tryptamine by the decarboxylase psiD. 4-hydroxy-L-tryptophan is accepted as substrate by psiD as well. The cytochrome P450 monooxygenase psiH then converts tryptamine to 4-hydroxytryptamine. The kinase psiK catalyzes the 4-O-phosphorylation step by converting 4-hydroxytryptamine into norbaeocystin. The methyltransferase psiM then catalyzes iterative methyl transfer to the amino group of norbaeocystin to yield psilocybin via a monomethylated intermediate, baeocystin. 4-hydroxy-6-methyl-l-tryptophancan also be converted the decarboxylase PsiD, kinase PsiK, and methyltransferase PsiM into respectively 6-methyl-norbaeocystin, 6-methylbaeocystin, and 6-methylpsilocybin. PsiK kinase can also turn psilocin into psilocybin. This activity may represent a protective mechanism to rephosphorylate the unstable psilocin to the stable psilocybin in case of intracellular ester cleavage. Moreover, psiK is able to O-phosphorylate the quaternary amine 4-hydroxy-N,N,N-trimethyltryptamine (4-OH-TMT) to yield aeruginascin, another bioactive compound found in Psilocybe species. The protein is 4-hydroxytryptamine kinase of Psilocybe cubensis (Psychedelic mushroom).